The sequence spans 379 residues: Lipid-A-disaccharide synthase (379 aa).

It belongs to the LpxB family.

The catalysed reaction is a lipid X + a UDP-2-N,3-O-bis[(3R)-3-hydroxyacyl]-alpha-D-glucosamine = a lipid A disaccharide + UDP + H(+). The protein operates within bacterial outer membrane biogenesis; LPS lipid A biosynthesis. Functionally, condensation of UDP-2,3-diacylglucosamine and 2,3-diacylglucosamine-1-phosphate to form lipid A disaccharide, a precursor of lipid A, a phosphorylated glycolipid that anchors the lipopolysaccharide to the outer membrane of the cell. This chain is Lipid-A-disaccharide synthase, found in Persephonella marina (strain DSM 14350 / EX-H1).